We begin with the raw amino-acid sequence, 447 residues long: Trigger factor (447 aa).

The PPIase FKBP-type domain occupies 159–244; the sequence is GDMLLMQVES…VREIKEEKLP (86 aa).

Belongs to the FKBP-type PPIase family. Tig subfamily.

The protein resides in the cytoplasm. It carries out the reaction [protein]-peptidylproline (omega=180) = [protein]-peptidylproline (omega=0). Functionally, involved in protein export. Acts as a chaperone by maintaining the newly synthesized protein in an open conformation. Functions as a peptidyl-prolyl cis-trans isomerase. The chain is Trigger factor from Dehalococcoides mccartyi (strain ATCC BAA-2100 / JCM 16839 / KCTC 5957 / BAV1).